Reading from the N-terminus, the 141-residue chain is Early nodulin-like protein 19 (141 aa).

The N-terminal stretch at 1–26 is a signal peptide; it reads MGRSMVLISAVVLAFLVAAPIPEVTA. The Phytocyanin domain maps to 27 to 127; sequence KKYLVGDKKF…GMKLDVLVET (101 aa). N-linked (GlcNAc...) asparagine glycans are attached at residues Asn42 and Asn88. A disulfide bond links Cys80 and Cys115.

It belongs to the early nodulin-like (ENODL) family.

May act as a carbohydrate transporter. This is Early nodulin-like protein 19 from Arabidopsis thaliana (Mouse-ear cress).